The sequence spans 670 residues: Small ribosomal subunit protein mS39 (670 aa).

Residues 1–13 constitute a mitochondrion transit peptide; that stretch reads MAAPCVRLGSVRC. 11 PPR repeats span residues 129–163, 164–199, 209–239, 240–274, 275–314, 315–351, 352–392, 396–430, 438–472, 473–507, and 556–590; these read VEGV…GTAP, SLET…EVQD, RPRQ…MPER, NAHS…RLTA, DVQT…NVRP, NLLT…NIEP, SLAT…FTLR, DVYF…DNRG, QSTY…LYYP, NSRG…GHSN, and SAGS…HRVP. Residues 187–213 are disordered; sequence IQTSEQEQQEVQDQQETEDPKKRPRQY. Positions 193 to 203 are enriched in acidic residues; that stretch reads EQQEVQDQQET. The interval 648-670 is disordered; it reads EDLQKSHSSSSSSSSSSSDSDRE. A compositionally biased stretch (low complexity) spans 653 to 670; the sequence is SHSSSSSSSSSSSDSDRE.

This sequence belongs to the mitochondrion-specific ribosomal protein mS39 family.

The protein localises to the mitochondrion. Its function is as follows. Mitochondrial protein that may have a role in mitochondrial translation. This chain is Small ribosomal subunit protein mS39 (ptcd3), found in Xenopus tropicalis (Western clawed frog).